Consider the following 199-residue polypeptide: Thymidine kinase (199 aa).

Residues 9–16 and 93–96 contribute to the ATP site; these read GAMSSGKT and DEAQ. Glutamate 94 (proton acceptor) is an active-site residue. 4 residues coordinate Zn(2+): cysteine 151, cysteine 154, cysteine 188, and histidine 191.

This sequence belongs to the thymidine kinase family. In terms of assembly, homotetramer.

The protein localises to the cytoplasm. It carries out the reaction thymidine + ATP = dTMP + ADP + H(+). The protein is Thymidine kinase of Lactobacillus acidophilus (strain ATCC 700396 / NCK56 / N2 / NCFM).